A 333-amino-acid chain; its full sequence is MSVLKRYDLEKLAVATVASHTALQILRGAKKYGFRTIAIAGRADVAEFYQQFNFIDEVWTVDFRNFVKAAEKLVEANAVFIPHGSYVEYVGWRQALEAPVPTLGCRELIKWEADQYKKMELLQRGGIPTSRVYKTPEEVDRPVIVKLFGAKGGRGYFLARDREELRRRLAGLSDYIIQEYVFGVPAYYHYFSSPVYGRVEVFGADIRYESNVDGRTFGWVEPTFVVVGNLPLVLRESLLPTIWKYGVQFAKAVEEVVGCRLAGPYCLESIIRDDMSISVFEFSGRIVAGTNIYMGYGSPYSVLYFDRPMDMGERIAHEIREAARRGRLEDLFT.

His20 and Ser85 together coordinate 5-amino-1-(5-phospho-beta-D-ribosyl)imidazole-4-carboxamide. The ATP-grasp domain maps to 106 to 313 (RELIKWEADQ…YFDRPMDMGE (208 aa)). ATP-binding positions include 136 to 187 (PEEV…VPAY) and Glu209. Position 229 (Asn229) interacts with 5-amino-1-(5-phospho-beta-D-ribosyl)imidazole-4-carboxamide. The Mg(2+) site is built by Glu268 and Glu281.

Belongs to the phosphohexose mutase family. The cofactor is Mg(2+). Mn(2+) serves as cofactor.

It carries out the reaction 5-amino-1-(5-phospho-beta-D-ribosyl)imidazole-4-carboxamide + formate + ATP = 5-formamido-1-(5-phospho-D-ribosyl)imidazole-4-carboxamide + ADP + phosphate. Its pathway is purine metabolism; IMP biosynthesis via de novo pathway; 5-formamido-1-(5-phospho-D-ribosyl)imidazole-4-carboxamide from 5-amino-1-(5-phospho-D-ribosyl)imidazole-4-carboxamide (formate route): step 1/1. Functionally, catalyzes the ATP- and formate-dependent formylation of 5-aminoimidazole-4-carboxamide-1-beta-d-ribofuranosyl 5'-monophosphate (AICAR) to 5-formaminoimidazole-4-carboxamide-1-beta-d-ribofuranosyl 5'-monophosphate (FAICAR) in the absence of folates. The chain is 5-formaminoimidazole-4-carboxamide-1-(beta)-D-ribofuranosyl 5'-monophosphate synthetase from Pyrobaculum islandicum (strain DSM 4184 / JCM 9189 / GEO3).